Reading from the N-terminus, the 369-residue chain is Anhydro-N-acetylmuramic acid kinase (369 aa).

12–19 (GTSLDGVD) contributes to the ATP binding site.

The protein belongs to the anhydro-N-acetylmuramic acid kinase family.

The catalysed reaction is 1,6-anhydro-N-acetyl-beta-muramate + ATP + H2O = N-acetyl-D-muramate 6-phosphate + ADP + H(+). It functions in the pathway amino-sugar metabolism; 1,6-anhydro-N-acetylmuramate degradation. It participates in cell wall biogenesis; peptidoglycan recycling. In terms of biological role, catalyzes the specific phosphorylation of 1,6-anhydro-N-acetylmuramic acid (anhMurNAc) with the simultaneous cleavage of the 1,6-anhydro ring, generating MurNAc-6-P. Is required for the utilization of anhMurNAc either imported from the medium or derived from its own cell wall murein, and thus plays a role in cell wall recycling. The protein is Anhydro-N-acetylmuramic acid kinase of Shigella flexneri.